The primary structure comprises 494 residues: Nuclear distribution protein PAC1 (494 aa).

A LisH domain is found at 14 to 46; it reads QKNELDKSVLRYLNWNYKQTVRHEHAQDYESVR. Positions 90–123 form a coiled coil; that stretch reads NSIVRLQKKIIELEQNTETLVSQIKDLNTQVSEL. 7 WD repeats span residues 153-192, 196-244, 251-292, 295-334, 347-395, 415-454, and 457-492; these read NVESSVTSVKLHPNLPIVFVATDHGKLYAFDLFNYTIPLA, SHTK…CKFQ, GHEH…SLKT, PHSQWVRSIDVLGDYIISGSHDTTLRLTHWPSGNGLSVGT, HFIE…LMAH, GHLSWVRDISIRGQYLFSCADDKSVRCWDLNTGQCLHVWE, and HTGFVNCLDLDVDFDSNVTPRQMMVTGGLDCKSNVF.

The protein belongs to the WD repeat LIS1/nudF family. Self-associates. Interacts with NDL1 and dynein.

It is found in the cytoplasm. It localises to the cytoskeleton. Its subcellular location is the spindle pole. Functionally, positively regulates the activity of the minus-end directed microtubule motor protein dynein. Plays a central role in positioning the mitotic spindle at the bud neck during cell division. Targets cytoplasmic dynein to microtubule plus ends, thereby promoting dynein-mediated microtubule sliding along the bud cortex and consequently the movement of the mitotic spindle to the bud neck. This Saccharomyces cerevisiae (strain RM11-1a) (Baker's yeast) protein is Nuclear distribution protein PAC1.